The primary structure comprises 139 residues: 6,7-dimethyl-8-ribityllumazine synthase (139 aa).

Residues Phe-11, 42 to 44, and 66 to 68 contribute to the 5-amino-6-(D-ribitylamino)uracil site; these read ALE and VVI. 71-72 lines the (2S)-2-hydroxy-3-oxobutyl phosphate pocket; sequence ET. His-74 acts as the Proton donor in catalysis. Asn-98 contacts 5-amino-6-(D-ribitylamino)uracil. Arg-112 is a (2S)-2-hydroxy-3-oxobutyl phosphate binding site.

It belongs to the DMRL synthase family.

It catalyses the reaction (2S)-2-hydroxy-3-oxobutyl phosphate + 5-amino-6-(D-ribitylamino)uracil = 6,7-dimethyl-8-(1-D-ribityl)lumazine + phosphate + 2 H2O + H(+). It functions in the pathway cofactor biosynthesis; riboflavin biosynthesis; riboflavin from 2-hydroxy-3-oxobutyl phosphate and 5-amino-6-(D-ribitylamino)uracil: step 1/2. Its function is as follows. Catalyzes the formation of 6,7-dimethyl-8-ribityllumazine by condensation of 5-amino-6-(D-ribitylamino)uracil with 3,4-dihydroxy-2-butanone 4-phosphate. This is the penultimate step in the biosynthesis of riboflavin. In Zymomonas mobilis subsp. mobilis (strain ATCC 31821 / ZM4 / CP4), this protein is 6,7-dimethyl-8-ribityllumazine synthase.